We begin with the raw amino-acid sequence, 219 residues long: Large ribosomal subunit protein uL3 (219 aa).

Positions Phe124–Ile154 are disordered.

Belongs to the universal ribosomal protein uL3 family. In terms of assembly, part of the 50S ribosomal subunit. Forms a cluster with proteins L14 and L19.

Functionally, one of the primary rRNA binding proteins, it binds directly near the 3'-end of the 23S rRNA, where it nucleates assembly of the 50S subunit. The protein is Large ribosomal subunit protein uL3 of Phytoplasma mali (strain AT).